The following is a 415-amino-acid chain: Ankyrin repeat domain-containing protein 10 (415 aa).

ANK repeat units follow at residues 20 to 49 (SLRFPLHRACRDGDLVALCSLLPHTPRAHL), 56 to 85 (YGWTPVHWAAHFGKLECLMQLVRAGASLNV), 90 to 119 (YAQTPAHIAAFGGHPQCLVWLIQAGANINK), and 123 to 152 (EGETPIHKAARSGSLECITALVGSGAHTDL). The segment covering 303 to 325 (TGSNGVSNGQPLSSGQASVSANG) has biased composition (polar residues). Positions 303–330 (TGSNGVSNGQPLSSGQASVSANGTEEPE) are disordered.

The polypeptide is Ankyrin repeat domain-containing protein 10 (Ankrd10) (Mus musculus (Mouse)).